A 598-amino-acid polypeptide reads, in one-letter code: tRNA(Met) cytidine acetyltransferase TmcA (598 aa).

ATP-binding positions include Q141, 163 to 172 (GRGKSTLAGK), and R288. One can recognise an N-acetyltransferase domain in the interval 332-490 (TDLRRLFDAD…HSAMMLYPLS (159 aa)). Acetyl-CoA contacts are provided by residues 411 to 413 (IAV), 418 to 424 (QNQGIGS), and R462.

It belongs to the RNA cytidine acetyltransferase family. TmcA subfamily.

Its subcellular location is the cytoplasm. The enzyme catalyses cytidine(34) in elongator tRNA(Met) + acetyl-CoA + ATP + H2O = N(4)-acetylcytidine(34) in elongator tRNA(Met) + ADP + phosphate + CoA + H(+). Functionally, catalyzes the formation of N(4)-acetylcytidine (ac(4)C) at the wobble position of tRNA(Met), by using acetyl-CoA as an acetyl donor and ATP (or GTP). The polypeptide is tRNA(Met) cytidine acetyltransferase TmcA (Haemophilus ducreyi (strain 35000HP / ATCC 700724)).